We begin with the raw amino-acid sequence, 303 residues long: L(+)-tartrate dehydratase subunit alpha (303 aa).

Cys-71, Cys-190, and Cys-277 together coordinate iron-sulfur cluster.

The protein belongs to the class-I fumarase family. In terms of assembly, tetramer of two alpha and two beta subunits. Iron-sulfur cluster serves as cofactor.

The enzyme catalyses (2R,3R)-tartrate = oxaloacetate + H2O. The chain is L(+)-tartrate dehydratase subunit alpha (ttdA) from Escherichia coli O6:H1 (strain CFT073 / ATCC 700928 / UPEC).